Here is a 554-residue protein sequence, read N- to C-terminus: Glutamine--tRNA ligase (554 aa).

Residues 34 to 44 (PEPNGYLHIGH) carry the 'HIGH' region motif. ATP-binding positions include 35–37 (EPN) and 41–47 (HIGHAKS). Residues D67 and Y212 each contribute to the L-glutamine site. Residues T231, 261–262 (RL), and 269–271 (MSK) contribute to the ATP site. Residues 268–272 (IMSKR) carry the 'KMSKS' region motif.

Belongs to the class-I aminoacyl-tRNA synthetase family. As to quaternary structure, monomer.

Its subcellular location is the cytoplasm. The enzyme catalyses tRNA(Gln) + L-glutamine + ATP = L-glutaminyl-tRNA(Gln) + AMP + diphosphate. This chain is Glutamine--tRNA ligase, found in Serratia proteamaculans (strain 568).